A 223-amino-acid chain; its full sequence is Icarapin (223 aa).

The N-terminal stretch at 1–19 (MKTLGVLFIAAWFIACTHS) is a signal peptide. Residues asparagine 126, asparagine 142, asparagine 168, and asparagine 193 are each glycosylated (N-linked (GlcNAc...) asparagine). Polar residues predominate over residues 186–203 (LPTLIGKNETSTQSSRSV). Residues 186-223 (LPTLIGKNETSTQSSRSVESVEDFDNEIPKNQGDVLTA) are disordered.

As to expression, expressed by the venom duct.

It localises to the secreted. The sequence is that of Icarapin from Apis mellifera carnica (Carniolan honeybee).